Consider the following 336-residue polypeptide: Ribosomal RNA large subunit methyltransferase F (336 aa).

It belongs to the methyltransferase superfamily. METTL16/RlmF family.

It localises to the cytoplasm. It catalyses the reaction adenosine(1618) in 23S rRNA + S-adenosyl-L-methionine = N(6)-methyladenosine(1618) in 23S rRNA + S-adenosyl-L-homocysteine + H(+). Specifically methylates the adenine in position 1618 of 23S rRNA. The protein is Ribosomal RNA large subunit methyltransferase F of Yersinia pestis (strain Pestoides F).